Reading from the N-terminus, the 166-residue chain is Sec-independent protein translocase protein TatB (166 aa).

The helical transmembrane segment at 1-21 threads the bilayer; it reads MIDIAFSKLAIIGVAALVFIG. Residues 85–146 are disordered; the sequence is DSSLHSAWDE…SGQKSRVISG (62 aa).

The protein belongs to the TatB family. The Tat system comprises two distinct complexes: a TatABC complex, containing multiple copies of TatA, TatB and TatC subunits, and a separate TatA complex, containing only TatA subunits. Substrates initially bind to the TatABC complex, which probably triggers association of the separate TatA complex to form the active translocon.

Its subcellular location is the cell inner membrane. In terms of biological role, part of the twin-arginine translocation (Tat) system that transports large folded proteins containing a characteristic twin-arginine motif in their signal peptide across membranes. Together with TatC, TatB is part of a receptor directly interacting with Tat signal peptides. TatB may form an oligomeric binding site that transiently accommodates folded Tat precursor proteins before their translocation. This is Sec-independent protein translocase protein TatB from Herminiimonas arsenicoxydans.